Reading from the N-terminus, the 214-residue chain is Potassium/proton antiporter CemA (214 aa).

2 helical membrane-spanning segments follow: residues 92-112 (ILHLSTNIICFIIFRGYSILG) and 174-194 (IISGLVSTFPVILDTIFKYWI).

This sequence belongs to the CemA family.

Its subcellular location is the plastid. The protein localises to the chloroplast inner membrane. The catalysed reaction is K(+)(in) + H(+)(out) = K(+)(out) + H(+)(in). In terms of biological role, contributes to K(+)/H(+) antiport activity by supporting proton efflux to control proton extrusion and homeostasis in chloroplasts in a light-dependent manner to modulate photosynthesis. Prevents excessive induction of non-photochemical quenching (NPQ) under continuous-light conditions. Indirectly promotes efficient inorganic carbon uptake into chloroplasts. This chain is Potassium/proton antiporter CemA, found in Oenothera argillicola (Appalachian evening primrose).